A 540-amino-acid polypeptide reads, in one-letter code: Putative cysteine ligase BshC (540 aa).

Residues 455-491 (GKENLKRLIRVVNSFEEKVKQRHRKNNQVAIQQLQKI) adopt a coiled-coil conformation.

It belongs to the BshC family.

In terms of biological role, involved in bacillithiol (BSH) biosynthesis. May catalyze the last step of the pathway, the addition of cysteine to glucosamine malate (GlcN-Mal) to generate BSH. This is Putative cysteine ligase BshC from Desulforamulus reducens (strain ATCC BAA-1160 / DSM 100696 / MI-1) (Desulfotomaculum reducens).